Here is a 1377-residue protein sequence, read N- to C-terminus: AAAKNGSPPQSAGASVRTFTPLYFLVEPVDTLSVRGSSVILNCSAYSEPSPNIEWKKDGTFLNLVSDDRRQLLPDGSLFISNVVHSKHNKPDEGFYQCVATVDNLGTIVSRTAKLAVAGLPRFTSQPEPSSIYVGNSGILNCEVNADLVPFVRWEQNRQPLLLDDRIVKLPSGTLVISNATEGDEGLYRCIVESGGPPKFSDEAELKVLQESEEMLDLVFLMRPSSMIKVIGQSAVLPCVASGLPAPVIRWMKNEDVLDTESSGRLALLAGGSLEISDVTEDDAGTYFCVADNGNKTIEAQAELTVQVPPEFLKQPANIYARESMDIVFECEVTGKPAPTVKWVKNGDVVIPSDYFKIVKEHNLQVLGLVKSDEGFYQCIAENDVGNAQAGAQLIILEHAPATTGPLPSAPRDVVASLVSTRFIKLTWRTPASDPHGDNLTYSVFYTKEGVARERVENTSQPGEMQVTIQNLMPATVYIFKVMAQNKHGSGESSAPLRVETQPEVQLPGPAPNIRAYATSPTSITVTWETPLSGNGEIQNYKLYYMEKGTDKEQDVDVSSHSYTINGLKKYTEYSFRVVAYNKHGPGVSTQDVAVRTLSDVPSAAPQNLSLEVRNSKSIVIHWQPPSSATQNGQITGYKIRYRKASRKSDVTETVVTGTQLSQLIEGLDRGTEYNFRVAALTVNGTGPATDWLSAETFESDLDESRVPEVPSSLHVRPLVTSIVVSWTPPENQNIVVRGYAIGYGIGSPHAQTIKVDYKQRYYTIENLDPSSHYVITLKAFNNVGEGIPLYESAVTRPHTDTSEVDLFVINAPYTPVPDPTPMMPPVGVQASILSHDTIRITWADNSLPKHQKITDSRYYTVRWKTNIPANTKYKNANATTLSYLVTGLKPNTLYEFSVMVTKGRRSSTWSMTAHGATFELVPTSPPKDVTVVSKEGKPRTIIVNWQPPSEANGKITGYIIYYSTDVNAEIHDWVIEPVVGNRLTHQIQELTLDTPYYFKIQARNSKGMGPMSEAVQFRTPKADSSDKMPNDQALGSAGKGGRLPDLGSDYKPPMSGSNSPHGSPTSPLDSNMLLVIIVSIGVITIVVVVIIAVFCTRRTTSHQKKKRAACKSVNGSHKYKGNCKDVKPPDLWIHHERLELKPIDKSPDPNPVMTDTPIPRNSQDITPVDNSMDSNIHQRRNSYRGHESEDSMSTLAGRRGMRPKMMMPFDSQPPQQSVRNTPSTDTMPASSSQTCCTDHQDPEGATSSSYLASSQEEDSGQSLPTAHVRPSHPLKSFAVPAIPPPGPPIYDPALPSTPLLSQQALNHHLHSVKTASIGTLGRSRPPMPVVVPSAPEVQEATRMLEDSESSYEPDELTKEMAHLEGLMKDLNAITTA.

The signal sequence occupies residues 1–2 (AA). At 3–1074 (AKNGSPPQSA…PTSPLDSNML (1072 aa)) the chain is on the extracellular side. 4 consecutive Ig-like C2-type domains span residues 21 to 114 (PLYF…RTAK), 121 to 206 (PRFT…EAEL), 198 to 305 (PKFS…AELT), and 310 to 395 (PEFL…AQLI). A glycan (N-linked (GlcNAc...) asparagine) is linked at N42. 3 disulfides stabilise this stretch: C43-C98, C142-C190, and C239-C289. The N-linked (GlcNAc...) asparagine glycan is linked to N179. Residue N295 is glycosylated (N-linked (GlcNAc...) asparagine). An intrachain disulfide couples C331 to C379. 6 Fibronectin type-III domains span residues 410-504 (APRD…TQPE), 510-600 (PAPN…TLSD), 605-700 (APQN…TFES), 710-800 (VPSS…RPHT), 825-924 (PPVG…LVPT), and 926-1023 (PPKD…TPKA). N439 and N458 each carry an N-linked (GlcNAc...) asparagine glycan. 2 N-linked (GlcNAc...) asparagine glycosylation sites follow: N608 and N684. Residue N878 is glycosylated (N-linked (GlcNAc...) asparagine). Residues 1010–1066 (GPMSEAVQFRTPKADSSDKMPNDQALGSAGKGGRLPDLGSDYKPPMSGSNSPHGSPT) form a disordered region. The span at 1021–1030 (PKADSSDKMP) shows a compositional bias: basic and acidic residues. Residues 1056-1066 (SGSNSPHGSPT) show a composition bias toward polar residues. A helical transmembrane segment spans residues 1075–1095 (LVIIVSIGVITIVVVVIIAVF). Over 1096–1377 (CTRRTTSHQK…MKDLNAITTA (282 aa)) the chain is Cytoplasmic. Positions 1143–1281 (PIDKSPDPNP…SHPLKSFAVP (139 aa)) are disordered. Phosphoserine occurs at positions 1147 and 1163. Composition is skewed to polar residues over residues 1160–1176 (PRNS…MDSN), 1213–1238 (QPPQ…TCCT), and 1246–1265 (ATSS…QSLP). T1167 carries the phosphothreonine modification. A Phosphoserine modification is found at S1317. Phosphothreonine is present on T1320. Phosphoserine occurs at positions 1348, 1350, and 1351.

The protein belongs to the immunoglobulin superfamily. DCC family. Interacts with MYO10. Interacts with RGMA and RGMB. Interacts with BMP2, BMP4, BMP6, and BMP7.

The protein localises to the cell membrane. Functionally, multi-functional cell surface receptor regulating cell adhesion in many diverse developmental processes, including neural tube and mammary gland formation, myogenesis and angiogenesis. Receptor for members of the BMP, netrin, and repulsive guidance molecule (RGM) families. Netrin-Neogenin interactions result in a chemoattractive axon guidance response and cell-cell adhesion, the interaction between NEO1/Neogenin and RGMa and RGMb induces a chemorepulsive response. In Rattus norvegicus (Rat), this protein is Neogenin (Neo1).